Reading from the N-terminus, the 261-residue chain is Global transcriptional regulator CodY (261 aa).

Positions 1–159 (MANLLSKTRR…SSTVVGIQLL (159 aa)) are GAF domain. A DNA-binding region (H-T-H motif) is located at residues 207 to 226 (ASVIADRIGITRSVIVNALR).

This sequence belongs to the CodY family.

Its subcellular location is the cytoplasm. In terms of biological role, DNA-binding global transcriptional regulator which is involved in the adaptive response to starvation and acts by directly or indirectly controlling the expression of numerous genes in response to nutrient availability. During rapid exponential growth, CodY is highly active and represses genes whose products allow adaptation to nutrient depletion. The chain is Global transcriptional regulator CodY from Streptococcus mutans serotype c (strain ATCC 700610 / UA159).